We begin with the raw amino-acid sequence, 389 residues long: Trans-2-enoyl-CoA reductase [NADH] (389 aa).

NAD(+)-binding positions include 47 to 52, 73 to 74, 110 to 111, and 138 to 139; these read GASTGY, FE, DA, and LA. Tyr224 is a substrate binding site. Catalysis depends on Tyr234, which acts as the Proton donor. NAD(+) is bound by residues Lys243 and 272–274; that span reads LVT.

The protein belongs to the TER reductase family. As to quaternary structure, monomer.

It carries out the reaction a 2,3-saturated acyl-CoA + NAD(+) = a (2E)-enoyl-CoA + NADH + H(+). The protein operates within lipid metabolism; fatty acid biosynthesis. Functionally, involved in the fatty acid synthesis (FAS II). Catalyzes the reduction of a carbon-carbon double bond in an enoyl moiety that is covalently linked to a coenzyme A (CoA). This Clostridium perfringens (strain 13 / Type A) protein is Trans-2-enoyl-CoA reductase [NADH].